Consider the following 292-residue polypeptide: Diaminopimelate epimerase (292 aa).

Residues Asn-14 and Asn-81 each contribute to the substrate site. Cys-90 serves as the catalytic Proton donor. Residues 91-92 (GN), Asn-166, Asn-202, and 220-221 (ER) contribute to the substrate site. Catalysis depends on Cys-229, which acts as the Proton acceptor. 230–231 (GT) serves as a coordination point for substrate.

Belongs to the diaminopimelate epimerase family. In terms of assembly, homodimer.

Its subcellular location is the cytoplasm. The enzyme catalyses (2S,6S)-2,6-diaminopimelate = meso-2,6-diaminopimelate. It functions in the pathway amino-acid biosynthesis; L-lysine biosynthesis via DAP pathway; DL-2,6-diaminopimelate from LL-2,6-diaminopimelate: step 1/1. Functionally, catalyzes the stereoinversion of LL-2,6-diaminopimelate (L,L-DAP) to meso-diaminopimelate (meso-DAP), a precursor of L-lysine and an essential component of the bacterial peptidoglycan. This Rhodococcus erythropolis (strain PR4 / NBRC 100887) protein is Diaminopimelate epimerase.